The following is a 126-amino-acid chain: Nucleoside diphosphate kinase B (126 aa).

Residues Lys-6, Phe-37, Thr-68, Arg-79, and Asn-89 each coordinate ATP. His-92 serves as the catalytic Pros-phosphohistidine intermediate.

Belongs to the NDK family. It depends on Mg(2+) as a cofactor.

The protein localises to the cytoplasm. The protein resides in the nucleus. Its subcellular location is the cell projection. It localises to the lamellipodium. It is found in the ruffle. It carries out the reaction a 2'-deoxyribonucleoside 5'-diphosphate + ATP = a 2'-deoxyribonucleoside 5'-triphosphate + ADP. The enzyme catalyses a ribonucleoside 5'-diphosphate + ATP = a ribonucleoside 5'-triphosphate + ADP. Its function is as follows. Major role in the synthesis of nucleoside triphosphates other than ATP. The protein is Nucleoside diphosphate kinase B (nme2) of Macruronus magellanicus (Patagonian grenadier).